Here is a 400-residue protein sequence, read N- to C-terminus: Subtilisin-like protease 7 (400 aa).

The signal sequence occupies residues 1–20 (MGFITKAIPLALAAMSVVNG). The propeptide occupies 21 to 119 (AEILETRAGV…IERDARVQIN (99 aa)). In terms of domain architecture, Inhibitor I9 spans 36–118 (KYIVIMNDGV…YIERDARVQI (83 aa)). A Peptidase S8 domain is found at 129–400 (SWGLARVGSR…GKLINNGSGK (272 aa)). Residues D161 and H192 each act as charge relay system in the active site. N-linked (GlcNAc...) asparagine glycans are attached at residues N222 and N252. S346 serves as the catalytic Charge relay system. A glycan (N-linked (GlcNAc...) asparagine) is linked at N396.

Belongs to the peptidase S8 family.

It localises to the secreted. In terms of biological role, secreted subtilisin-like serine protease with keratinolytic activity that contributes to pathogenicity. The chain is Subtilisin-like protease 7 (SUB7) from Arthroderma otae (strain ATCC MYA-4605 / CBS 113480) (Microsporum canis).